The primary structure comprises 120 residues: Seripauperin-13 (120 aa).

The N-terminal stretch at 1-25 (MVKLTSIAAGVAAIAATASATTTLA) is a signal peptide.

This sequence belongs to the SRP1/TIP1 family. Seripauperin subfamily.

The polypeptide is Seripauperin-13 (PAU13) (Saccharomyces cerevisiae (strain ATCC 204508 / S288c) (Baker's yeast)).